The primary structure comprises 595 residues: 2-succinyl-5-enolpyruvyl-6-hydroxy-3-cyclohexene-1-carboxylate synthase (595 aa).

This sequence belongs to the TPP enzyme family. MenD subfamily. As to quaternary structure, homodimer. The cofactor is Mg(2+). Mn(2+) serves as cofactor. It depends on thiamine diphosphate as a cofactor.

The enzyme catalyses isochorismate + 2-oxoglutarate + H(+) = 5-enolpyruvoyl-6-hydroxy-2-succinyl-cyclohex-3-ene-1-carboxylate + CO2. It functions in the pathway quinol/quinone metabolism; 1,4-dihydroxy-2-naphthoate biosynthesis; 1,4-dihydroxy-2-naphthoate from chorismate: step 2/7. Its pathway is cofactor biosynthesis; phylloquinone biosynthesis. Catalyzes the thiamine diphosphate-dependent decarboxylation of 2-oxoglutarate and the subsequent addition of the resulting succinic semialdehyde-thiamine pyrophosphate anion to isochorismate to yield 2-succinyl-5-enolpyruvyl-6-hydroxy-3-cyclohexene-1-carboxylate (SEPHCHC). The sequence is that of 2-succinyl-5-enolpyruvyl-6-hydroxy-3-cyclohexene-1-carboxylate synthase from Synechocystis sp. (strain ATCC 27184 / PCC 6803 / Kazusa).